Here is a 164-residue protein sequence, read N- to C-terminus: Protein-export protein SecB (164 aa).

The protein belongs to the SecB family. In terms of assembly, homotetramer, a dimer of dimers. One homotetramer interacts with 1 SecA dimer.

The protein localises to the cytoplasm. Functionally, one of the proteins required for the normal export of preproteins out of the cell cytoplasm. It is a molecular chaperone that binds to a subset of precursor proteins, maintaining them in a translocation-competent state. It also specifically binds to its receptor SecA. This chain is Protein-export protein SecB, found in Stutzerimonas stutzeri (strain A1501) (Pseudomonas stutzeri).